Reading from the N-terminus, the 527-residue chain is Peptide chain release factor 3 (527 aa).

The tr-type G domain maps to 9–277; the sequence is AKRRTFAIIS…CIVDWAPQPL (269 aa). GTP-binding positions include 18–25, 86–90, and 140–143; these read SHPDAGKT, DTPGH, and NKLD.

This sequence belongs to the TRAFAC class translation factor GTPase superfamily. Classic translation factor GTPase family. PrfC subfamily.

It localises to the cytoplasm. Its function is as follows. Increases the formation of ribosomal termination complexes and stimulates activities of RF-1 and RF-2. It binds guanine nucleotides and has strong preference for UGA stop codons. It may interact directly with the ribosome. The stimulation of RF-1 and RF-2 is significantly reduced by GTP and GDP, but not by GMP. The chain is Peptide chain release factor 3 from Pseudomonas aeruginosa (strain LESB58).